Reading from the N-terminus, the 312-residue chain is Salivary protein SG34 (312 aa).

Positions 1-20 (MSPSKKILVLLLFPILLVSS) are cleaved as a signal peptide. Positions 95–158 (NMEVQLLRES…QEEIEEQTKQ (64 aa)) form a coiled coil.

This sequence belongs to the salivary protein SG34 family. Female salivary gland (at protein level). Low-level expression in ovary.

In terms of biological role, possible serine protease. (Microbial infection) Modulates replication of duck Tembusu virus in salivary glands and virus release into the saliva, probably via the regulation of antimicrobial peptides expression in response to virus infection. Functionally, (Microbial infection) Enhances replication of dengue virus type 2 in human keratinocytes, probably by suppressing the production of type I interferons and antimicrobial peptides in response to virus infection. This is Salivary protein SG34 from Aedes aegypti (Yellowfever mosquito).